The following is a 427-amino-acid chain: UDP-N-acetylglucosamine 1-carboxyvinyltransferase (427 aa).

22-23 (KN) serves as a coordination point for phosphoenolpyruvate. Position 92 (Arg92) interacts with UDP-N-acetyl-alpha-D-glucosamine. The active-site Proton donor is the Asp116. Asp312 and Met334 together coordinate UDP-N-acetyl-alpha-D-glucosamine.

This sequence belongs to the EPSP synthase family. MurA subfamily.

The protein localises to the cytoplasm. It catalyses the reaction phosphoenolpyruvate + UDP-N-acetyl-alpha-D-glucosamine = UDP-N-acetyl-3-O-(1-carboxyvinyl)-alpha-D-glucosamine + phosphate. The protein operates within cell wall biogenesis; peptidoglycan biosynthesis. Functionally, cell wall formation. Adds enolpyruvyl to UDP-N-acetylglucosamine. The chain is UDP-N-acetylglucosamine 1-carboxyvinyltransferase from Borrelia garinii subsp. bavariensis (strain ATCC BAA-2496 / DSM 23469 / PBi) (Borreliella bavariensis).